Here is a 408-residue protein sequence, read N- to C-terminus: Probable serine/threonine-protein kinase PBL16 (408 aa).

G2 carries N-myristoyl glycine lipidation. The S-palmitoyl cysteine moiety is linked to residue C4. The interval 17–50 (ANAKSESPKEQSPTVEDKHIKEVQKLPSNPKEVE) is disordered. Over residues 18-30 (NAKSESPKEQSPT) the composition is skewed to polar residues. Positions 31-40 (VEDKHIKEVQ) are enriched in basic and acidic residues. The residue at position 65 (T65) is a Phosphothreonine. The Protein kinase domain occupies 76–360 (FRQDRVLGGG…DIVDSLEPLQ (285 aa)). ATP is bound by residues 82–90 (LGGGGFGSV) and K113. A Phosphotyrosine modification is found at Y159. D209 acts as the Proton acceptor in catalysis. S213 and S243 each carry phosphoserine. Phosphothreonine is present on residues T244 and T249. Residue Y257 is modified to Phosphotyrosine.

The protein belongs to the protein kinase superfamily. Ser/Thr protein kinase family. In terms of processing, palmitoylation at Cys-4 and Cys-6 are required for plasma membrane location.

It is found in the cell membrane. The enzyme catalyses L-seryl-[protein] + ATP = O-phospho-L-seryl-[protein] + ADP + H(+). It catalyses the reaction L-threonyl-[protein] + ATP = O-phospho-L-threonyl-[protein] + ADP + H(+). In terms of biological role, may be involved in plant defense signaling. This is Probable serine/threonine-protein kinase PBL16 from Arabidopsis thaliana (Mouse-ear cress).